We begin with the raw amino-acid sequence, 222 residues long: MTRDLTPVEARIVGVLVEKQSTVPDTYPLSLNSLVAGCNQKTTRDPVMTLTDAQVLLAIDELKSLHLVLEGSGSRVVRYEHNLGRVLGVPGAAVALLATLMLRGPQTAAELRAHSERLHRFADVSSVEGFLDELAEKSPPRVLKLPRAPGAREARWVHLLCGEVDVAALSVGGAASQMAGGAADDELALLRAEHKQVLAEVALLRSQVQRLADELGVNLDPA.

The protein belongs to the UPF0502 family.

In Leptothrix cholodnii (strain ATCC 51168 / LMG 8142 / SP-6) (Leptothrix discophora (strain SP-6)), this protein is UPF0502 protein Lcho_2066.